Here is a 216-residue protein sequence, read N- to C-terminus: Thiamine-phosphate synthase (216 aa).

Residues 40–44 (QLRIK) and Asn-72 contribute to the 4-amino-2-methyl-5-(diphosphooxymethyl)pyrimidine site. Residues Asp-73 and Asp-92 each contribute to the Mg(2+) site. Ser-111 serves as a coordination point for 4-amino-2-methyl-5-(diphosphooxymethyl)pyrimidine. 2-[(2R,5Z)-2-carboxy-4-methylthiazol-5(2H)-ylidene]ethyl phosphate is bound at residue 137–139 (TTT). Residue Lys-140 coordinates 4-amino-2-methyl-5-(diphosphooxymethyl)pyrimidine. 2-[(2R,5Z)-2-carboxy-4-methylthiazol-5(2H)-ylidene]ethyl phosphate contacts are provided by residues Gly-169 and 189 to 190 (VS).

This sequence belongs to the thiamine-phosphate synthase family. It depends on Mg(2+) as a cofactor.

It carries out the reaction 2-[(2R,5Z)-2-carboxy-4-methylthiazol-5(2H)-ylidene]ethyl phosphate + 4-amino-2-methyl-5-(diphosphooxymethyl)pyrimidine + 2 H(+) = thiamine phosphate + CO2 + diphosphate. It catalyses the reaction 2-(2-carboxy-4-methylthiazol-5-yl)ethyl phosphate + 4-amino-2-methyl-5-(diphosphooxymethyl)pyrimidine + 2 H(+) = thiamine phosphate + CO2 + diphosphate. The enzyme catalyses 4-methyl-5-(2-phosphooxyethyl)-thiazole + 4-amino-2-methyl-5-(diphosphooxymethyl)pyrimidine + H(+) = thiamine phosphate + diphosphate. It participates in cofactor biosynthesis; thiamine diphosphate biosynthesis; thiamine phosphate from 4-amino-2-methyl-5-diphosphomethylpyrimidine and 4-methyl-5-(2-phosphoethyl)-thiazole: step 1/1. Functionally, condenses 4-methyl-5-(beta-hydroxyethyl)thiazole monophosphate (THZ-P) and 2-methyl-4-amino-5-hydroxymethyl pyrimidine pyrophosphate (HMP-PP) to form thiamine monophosphate (TMP). The sequence is that of Thiamine-phosphate synthase from Photorhabdus laumondii subsp. laumondii (strain DSM 15139 / CIP 105565 / TT01) (Photorhabdus luminescens subsp. laumondii).